Consider the following 581-residue polypeptide: 2-hydroxyacyl-CoA lyase 1 (581 aa).

A phosphoserine mark is found at serine 4 and serine 6. Glutamate 63 contributes to the thiamine diphosphate binding site. 3 positions are modified to N6-succinyllysine: lysine 354, lysine 361, and lysine 368. The interval 404–487 is thiamine pyrophosphate binding; that stretch reads TMDIGRTMLQ…IILLVVNNNG (84 aa). Mg(2+) is bound by residues aspartate 458 and asparagine 485. The short motif at 579 to 581 is the Microbody targeting signal element; sequence SNM.

This sequence belongs to the TPP enzyme family. As to quaternary structure, homotetramer. Mg(2+) is required as a cofactor. The cofactor is thiamine diphosphate. As to expression, predominanly expressed in liver.

The protein resides in the peroxisome. It catalyses the reaction a 2-hydroxy-3-methyl fatty acyl-CoA = a 2-methyl-branched fatty aldehyde + formyl-CoA. The enzyme catalyses an (R)-2-hydroxy-long-chain-fatty acyl-CoA = a long-chain fatty aldehyde + formyl-CoA. It carries out the reaction 2-hydroxy-3-methylhexadecanoyl-CoA = 2-methylpentadecanal + formyl-CoA. The catalysed reaction is 2-hydroxyoctadecanoyl-CoA = heptadecanal + formyl-CoA. It catalyses the reaction 2-hydroxyphytanoyl-CoA = 2,6,10,14-tetramethylpentadecanal + formyl-CoA. It participates in lipid metabolism; fatty acid metabolism. Functionally, peroxisomal 2-OH acyl-CoA lyase involved in the cleavage (C1 removal) reaction in the fatty acid alpha-oxydation in a thiamine pyrophosphate (TPP)-dependent manner. Involved in the degradation of 3-methyl-branched fatty acids like phytanic acid and the shortening of 2-hydroxy long-chain fatty acids. Plays a significant role in the biosynthesis of heptadecanal in the liver. This Mus musculus (Mouse) protein is 2-hydroxyacyl-CoA lyase 1 (Hacl1).